The following is a 902-amino-acid chain: Ephrin type-B receptor 1-B (902 aa).

The Eph LBD domain occupies H1–Q119. At H1–L459 the chain is on the extracellular side. 2 consecutive Fibronectin type-III domains span residues V240–A350 and A351–D448. Residues N252, N344, and N398 are each glycosylated (N-linked (GlcNAc...) asparagine). A helical transmembrane segment spans residues I460–V480. Residues C481–A902 lie on the Cytoplasmic side of the membrane. The Protein kinase domain occupies V537–I800. Residues I543–V551 and K569 each bind ATP. The active-site Proton acceptor is the D662. Positions S829–Q893 constitute an SAM domain. Residues S900–A902 carry the PDZ-binding motif.

The protein belongs to the protein kinase superfamily. Tyr protein kinase family. Ephrin receptor subfamily. As to quaternary structure, heterotetramer upon binding of the ligand. The heterotetramer is composed of an ephrin dimer and a receptor dimer. Oligomerization is probably required to induce biological responses. In terms of processing, phosphorylated. Autophosphorylation is stimulated by ligands. Expressed in the embryo in the brain and spinal cord and in the first and fourth visceral arches. Most abundant in adult brain, with lower levels in eye, heart, ovary, oviduct, lung and pharynx.

Its subcellular location is the cell membrane. It is found in the early endosome membrane. The protein resides in the cell projection. The protein localises to the dendrite. It carries out the reaction L-tyrosyl-[protein] + ATP = O-phospho-L-tyrosyl-[protein] + ADP + H(+). In terms of biological role, receptor tyrosine kinase which binds promiscuously transmembrane ephrin-B family ligands residing on adjacent cells, leading to contact-dependent bidirectional signaling into neighboring cells. The signaling pathway downstream of the receptor is referred to as forward signaling while the signaling pathway downstream of the ephrin ligand is referred to as reverse signaling. May play a role in axon guidance during nervous system development. May also play an important redundant role with other ephrin-B receptors in development and maturation of dendritic spines and synapse formation. More generally, may play a role in targeted cell migration and adhesion. Upon activation by ephrin-B ligands activates the MAPK/ERK and the JNK signaling cascades to regulate cell migration and adhesion respectively. The protein is Ephrin type-B receptor 1-B (ephb1-b) of Xenopus laevis (African clawed frog).